Here is a 200-residue protein sequence, read N- to C-terminus: Recombination protein RecR (200 aa).

The segment at 59-74 (CDICGNVCETSPCPVC) adopts a C4-type zinc-finger fold. The Toprim domain maps to 82–177 (SVICVVEEPK…KVTRLASGLP (96 aa)).

This sequence belongs to the RecR family.

In terms of biological role, may play a role in DNA repair. It seems to be involved in an RecBC-independent recombinational process of DNA repair. It may act with RecF and RecO. The polypeptide is Recombination protein RecR (Bifidobacterium adolescentis (strain ATCC 15703 / DSM 20083 / NCTC 11814 / E194a)).